Consider the following 338-residue polypeptide: Fructose-1,6-bisphosphatase 1 (338 aa).

Position 2 is an N-acetylalanine (Ala-2). AMP-binding positions include 18–22 and 28–32; these read VMEQG and TGELT. Residues Asp-69 and Glu-98 each contribute to the Mg(2+) site. 113-114 contributes to the AMP binding site; sequence KY. Mg(2+) contacts are provided by Asp-119, Leu-121, and Asp-122. 122-125 contributes to the substrate binding site; the sequence is DGSS. Arg-141 contributes to the AMP binding site. Lys-151 carries the post-translational modification N6-succinyllysine. Substrate is bound by residues 213–216, 244–249, Tyr-265, and 275–277; these read NEGY, RYVGSM, and KLR. Phosphotyrosine is present on residues Tyr-216, Tyr-245, and Tyr-265. Position 281 (Glu-281) interacts with Mg(2+).

It belongs to the FBPase class 1 family. As to quaternary structure, homotetramer. Mg(2+) is required as a cofactor. Detected in pancreatic beta-cell lines MIN6 and beta-TC and in liver (at protein level). Preferentially expressed in liver, with lower levels detected in pancreatic islets and intestine, and very low levels in blood, muscle, brain and spleen.

The enzyme catalyses beta-D-fructose 1,6-bisphosphate + H2O = beta-D-fructose 6-phosphate + phosphate. The protein operates within carbohydrate biosynthesis; gluconeogenesis. With respect to regulation, subject to complex allosteric regulation. The enzyme can assume an active R-state, or an inactive T-state. Intermediate conformations may exist. AMP acts as an allosteric inhibitor. AMP binding affects the turnover of bound substrate and not the affinity for substrate. Fructose 2,6-bisphosphate acts as a competitive inhibitor. Fructose 2,6-bisphosphate and AMP have synergistic effects. Functionally, catalyzes the hydrolysis of fructose 1,6-bisphosphate to fructose 6-phosphate in the presence of divalent cations, acting as a rate-limiting enzyme in gluconeogenesis. Plays a role in regulating glucose sensing and insulin secretion of pancreatic beta-cells. Appears to modulate glycerol gluconeogenesis in liver. Important regulator of appetite and adiposity; increased expression of the protein in liver after nutrient excess increases circulating satiety hormones and reduces appetite-stimulating neuropeptides and thus seems to provide a feedback mechanism to limit weight gain. The polypeptide is Fructose-1,6-bisphosphatase 1 (Fbp1) (Mus musculus (Mouse)).